The sequence spans 385 residues: Putative ribosomal RNA large subunit methyltransferase MJ1653 (385 aa).

The 80-residue stretch at 2 to 81 folds into the PUA domain; that stretch reads TTKLYVDFGG…LDENYIREKI (80 aa).

The protein belongs to the methyltransferase superfamily. RlmI family.

It is found in the cytoplasm. This Methanocaldococcus jannaschii (strain ATCC 43067 / DSM 2661 / JAL-1 / JCM 10045 / NBRC 100440) (Methanococcus jannaschii) protein is Putative ribosomal RNA large subunit methyltransferase MJ1653.